The chain runs to 1191 residues: Serine/threonine-protein kinase dkf-2 (1191 aa).

2 disordered regions span residues Tyr-11–Ser-48 and Met-108–Val-155. Residues Thr-123–Pro-139 show a composition bias toward basic and acidic residues. Residues Ser-140 to Ser-150 are compositionally biased toward low complexity. 2 Phorbol-ester/DAG-type zinc fingers span residues Pro-314 to Cys-364 and Pro-466 to Cys-531. Residues Val-549–Ala-594 form a disordered region. Residues Leu-632–Asp-713 enclose the PH domain. Positions Pro-730 to Ser-786 are disordered. Low complexity predominate over residues Ser-738–Val-751. Polar residues predominate over residues Gly-756–Val-765. A compositionally biased stretch (low complexity) spans Ser-773–Ser-786. A Protein kinase domain is found at Ile-891 to Met-1147. Residues Leu-897–Val-905 and Lys-920 each bind ATP. The Proton acceptor role is filled by Asp-1014. Phosphoserine occurs at positions 1046 and 1050.

It belongs to the protein kinase superfamily. CAMK Ser/Thr protein kinase family. PKD subfamily. It depends on Mg(2+) as a cofactor. In terms of processing, phosphorylation on Ser-1046 is the dominant regulator of catalysis, phosphorylation on Ser-1050 has a lesser effect. Prolonged phosphorylation results in ubiquitination and degradation.

It localises to the cytoplasm. It is found in the membrane. The catalysed reaction is L-seryl-[protein] + ATP = O-phospho-L-seryl-[protein] + ADP + H(+). The enzyme catalyses L-threonyl-[protein] + ATP = O-phospho-L-threonyl-[protein] + ADP + H(+). Activated by DAG and phorbol esters. Phorbol-ester/DAG-type domain 1 binds phorbol ester with low affinity. Phorbol-ester/DAG-type domain 2 binds phorbol ester with high affinity and targets the kinase to the cell periphery, enabling phosphorylation and activation by colocalized tpa-1. Both domains 1 and 2 appear to bind DAG with equal affinity so may contribute equally to translocation and activation. In terms of biological role, converts transient diacylglycerol (DAG) signals into prolonged physiological effects, downstream of PKC. Acts in the intestine to regulate both innate immunity by promoting activation of pmk-1 and also stress response and life span by acting as an upstream, negative regulator of the daf-16 transcription factor. The chain is Serine/threonine-protein kinase dkf-2 from Caenorhabditis briggsae.